A 297-amino-acid chain; its full sequence is Calponin-1 (297 aa).

The 104-residue stretch at 28–131 folds into the Calponin-homology (CH) domain; sequence HQREQELREW…STLLALASMA (104 aa). Calponin-like repeat units lie at residues 164 to 189, 204 to 229, and 243 to 268; these read IGLQ…RHLY, ISLQ…RQIF, and VSLQ…RQVY. At Thr170 the chain carries Phosphothreonine; by ROCK2. Ser175 is subject to Phosphoserine; by ROCK2. Thr180 and Thr184 each carry phosphothreonine; by ROCK2. Thr259 is modified (phosphothreonine; by ROCK2).

It belongs to the calponin family. As to quaternary structure, part of cGMP kinase signaling complex at least composed of ACTA2/alpha-actin, CNN1/calponin H1, PLN/phospholamban, PRKG1 and ITPR1.

Functionally, thin filament-associated protein that is implicated in the regulation and modulation of smooth muscle contraction. It is capable of binding to actin, calmodulin and tropomyosin. The interaction of calponin with actin inhibits the actomyosin Mg-ATPase activity. This chain is Calponin-1 (CNN1), found in Ovis aries (Sheep).